A 766-amino-acid polypeptide reads, in one-letter code: Phosphoribosylformylglycinamidine synthase subunit PurL (766 aa).

His-66 is a catalytic residue. Positions 69 and 113 each coordinate ATP. Glu-115 serves as a coordination point for Mg(2+). Substrate-binding positions include 116–119 (SHNH) and Arg-138. The Proton acceptor role is filled by His-117. Mg(2+) is bound at residue Asp-139. Gln-264 provides a ligand contact to substrate. Position 292 (Asp-292) interacts with Mg(2+). 336–338 (ESQ) contributes to the substrate binding site. ATP contacts are provided by Asn-524 and Gly-561. Asn-562 provides a ligand contact to Mg(2+). Position 564 (Ser-564) interacts with substrate.

It belongs to the FGAMS family. As to quaternary structure, monomer. Part of the FGAM synthase complex composed of 1 PurL, 1 PurQ and 2 PurS subunits.

It is found in the cytoplasm. The catalysed reaction is N(2)-formyl-N(1)-(5-phospho-beta-D-ribosyl)glycinamide + L-glutamine + ATP + H2O = 2-formamido-N(1)-(5-O-phospho-beta-D-ribosyl)acetamidine + L-glutamate + ADP + phosphate + H(+). Its pathway is purine metabolism; IMP biosynthesis via de novo pathway; 5-amino-1-(5-phospho-D-ribosyl)imidazole from N(2)-formyl-N(1)-(5-phospho-D-ribosyl)glycinamide: step 1/2. In terms of biological role, part of the phosphoribosylformylglycinamidine synthase complex involved in the purines biosynthetic pathway. Catalyzes the ATP-dependent conversion of formylglycinamide ribonucleotide (FGAR) and glutamine to yield formylglycinamidine ribonucleotide (FGAM) and glutamate. The FGAM synthase complex is composed of three subunits. PurQ produces an ammonia molecule by converting glutamine to glutamate. PurL transfers the ammonia molecule to FGAR to form FGAM in an ATP-dependent manner. PurS interacts with PurQ and PurL and is thought to assist in the transfer of the ammonia molecule from PurQ to PurL. This is Phosphoribosylformylglycinamidine synthase subunit PurL from Mycobacterium tuberculosis (strain CDC 1551 / Oshkosh).